Reading from the N-terminus, the 327-residue chain is Probable cell division protein WhiA (327 aa).

A DNA-binding region (H-T-H motif) is located at residues 275–308 (SLEELGRLADPVMTKDAVAGRIRRLLSMADRKAK). The tract at residues 307–327 (AKTEGIPDTESAVTPELLEEA) is disordered.

The protein belongs to the WhiA family.

Involved in cell division and chromosome segregation. The sequence is that of Probable cell division protein WhiA from Mycobacteroides abscessus (strain ATCC 19977 / DSM 44196 / CCUG 20993 / CIP 104536 / JCM 13569 / NCTC 13031 / TMC 1543 / L948) (Mycobacterium abscessus).